Reading from the N-terminus, the 691-residue chain is MIMVRRRQRPAKEAASSSSGGASSGSGIPVDQALPLNVAGNLLEDQYFASPKRKDCRLMKVTQNGQLPEATMMAHNKDNKAGRTIGVPLATRSQTRTIENFFKANAAAKDSQKTIHTEEQLNLGNQELKLDDEELNGQIKLDDEVLKLADKQINENLPFADEVDAKAEQKLMDEELQQVVEELLFDGSSRASSNSPFYQHDMDVMQEIQQTPEIPHIKKVTEPLEGLGSLADFQTHRSALRDSHSSTHSSSTDNIFLQEPVLTLDIDRTPTKASSIKINRSFELAGAVFSSPPSVLNACLNGRFNQIVSLNGQKEALDLPHFDLDQHDSSSCDSGVACGLTANTESPAGQPRRRKPATPHRILCPSPIKTALKVTGGICKVGSADPLSPRKSPRKLPTTTAAVAACKSRRRLNQPKPQAPYQPQLQKPPSQQQQQQQDDIVVVLDDDDDEGDDEDDVRALIKAAEERENQNKAPATANSNKAGMKTMLKPAPVKSKTKSKGPTKGQPPLPLAATNGNREMTDFFPVRRSVRKTKTAVKEEWMRGLEQAVLEERCDGLQVRHFMGKGRGVVADRPFKRNEFVVEYVGDLISIGEAAEREKRYALDENAGCYMYYFKHKSQQYCIDATVDTGKLGRLINHSRAGNLMTKVVLIKQRPHLVLLAKDDIEPGEELTYDYGDRSKESLLHHPWLAF.

Positions 1-29 (MIMVRRRQRPAKEAASSSSGGASSGSGIP) are disordered. Residues 14-27 (AASSSSGGASSGSG) show a composition bias toward low complexity. Residues S195 and S250 each carry the phosphoserine modification. A Phosphothreonine modification is found at T252. Residue S281 is modified to Phosphoserine. Disordered stretches follow at residues 341 to 363 (TANT…HRIL), 382 to 401 (GSAD…TTTA), 407 to 437 (KSRR…QQQQ), and 464 to 516 (AEER…ATNG). T344 is modified (phosphothreonine). A phosphoserine mark is found at S346, S383, S388, and S392. Composition is skewed to polar residues over residues 421 to 430 (YQPQLQKPPS) and 471 to 481 (NKAPATANSNK). The SET domain occupies 555-676 (DGLQVRHFMG…PGEELTYDYG (122 aa)). Residues 565 to 567 (KGR), Y610, and 637 to 638 (NH) each bind S-adenosyl-L-methionine.

Belongs to the class V-like SAM-binding methyltransferase superfamily. Histone-lysine methyltransferase family. PR/SET subfamily.

It is found in the nucleus. The protein localises to the chromosome. It catalyses the reaction L-lysyl(20)-[histone H4] + S-adenosyl-L-methionine = N(6)-methyl-L-lysyl(20)-[histone H4] + S-adenosyl-L-homocysteine + H(+). Histone methyltransferase that specifically monomethylates 'Lys-20' of histone H4. H4 'Lys-20' monomethylation is enriched during mitosis and represents a specific tag for epigenetic transcriptional repression. Mainly functions in euchromatin regions, thereby playing a central role in the silencing of euchromatic genes. Required for cell proliferation, possibly by contributing to the maintenance of proper higher-order structure of DNA and chromosome condensation during mitosis. The chain is Histone-lysine N-methyltransferase Set8 from Drosophila melanogaster (Fruit fly).